The chain runs to 328 residues: Phenylalanine--tRNA ligase alpha subunit (328 aa).

Glu245 serves as a coordination point for Mg(2+).

It belongs to the class-II aminoacyl-tRNA synthetase family. Phe-tRNA synthetase alpha subunit type 1 subfamily. Tetramer of two alpha and two beta subunits. It depends on Mg(2+) as a cofactor.

It localises to the cytoplasm. It carries out the reaction tRNA(Phe) + L-phenylalanine + ATP = L-phenylalanyl-tRNA(Phe) + AMP + diphosphate + H(+). The chain is Phenylalanine--tRNA ligase alpha subunit from Helicobacter acinonychis (strain Sheeba).